Reading from the N-terminus, the 205-residue chain is High frequency lysogenization protein HflD homolog (205 aa).

Belongs to the HflD family.

It localises to the cytoplasm. Its subcellular location is the cell inner membrane. The chain is High frequency lysogenization protein HflD homolog from Photobacterium profundum (strain SS9).